Reading from the N-terminus, the 366-residue chain is Ribosomal RNA large subunit methyltransferase M (366 aa).

S-adenosyl-L-methionine-binding positions include S188, 221–224, D240, D260, and D277; that span reads CPGG. The active-site Proton acceptor is the K306.

The protein belongs to the class I-like SAM-binding methyltransferase superfamily. RNA methyltransferase RlmE family. RlmM subfamily. In terms of assembly, monomer.

Its subcellular location is the cytoplasm. The enzyme catalyses cytidine(2498) in 23S rRNA + S-adenosyl-L-methionine = 2'-O-methylcytidine(2498) in 23S rRNA + S-adenosyl-L-homocysteine + H(+). Functionally, catalyzes the 2'-O-methylation at nucleotide C2498 in 23S rRNA. This chain is Ribosomal RNA large subunit methyltransferase M, found in Shigella dysenteriae serotype 1 (strain Sd197).